A 202-amino-acid polypeptide reads, in one-letter code: LexA repressor (202 aa).

The segment at residues 28–48 is a DNA-binding region (H-T-H motif); that stretch reads RAEIAQELGFKSPNAAEEHLK. Active-site for autocatalytic cleavage activity residues include Ser-123 and Lys-160.

The protein belongs to the peptidase S24 family. In terms of assembly, homodimer.

The enzyme catalyses Hydrolysis of Ala-|-Gly bond in repressor LexA.. Its function is as follows. Represses a number of genes involved in the response to DNA damage (SOS response), including recA and lexA. In the presence of single-stranded DNA, RecA interacts with LexA causing an autocatalytic cleavage which disrupts the DNA-binding part of LexA, leading to derepression of the SOS regulon and eventually DNA repair. This chain is LexA repressor, found in Pseudomonas putida (Arthrobacter siderocapsulatus).